A 628-amino-acid polypeptide reads, in one-letter code: Choline transporter-like protein 2 (628 aa).

Topologically, residues 1-31 (MSSEDLQDHHEIGNEVIKKKGVYTKKKCQDC) are cytoplasmic. The chain crosses the membrane as a helical span at residues 32–52 (FFLILFLLFWAGMIVVAAFGV). Residues 53-204 (KNGKPDRIVK…EILTDLTNSW (152 aa)) lie on the Extracellular side of the membrane. 4 N-linked (GlcNAc...) asparagine glycosylation sites follow: Asn82, Asn118, Asn146, and Asn168. Residues 205–225 (RYLIYGALIAMGLGLTWIFLL) traverse the membrane as a helical segment. Arg226 is a topological domain (cytoplasmic). A helical transmembrane segment spans residues 227–247 (FFAGFITWLTVFAAYACLGLL). Residues 248–282 (TAQVYFQWQDSKDAYENTIPSQRLVMQEKNILALK) lie on the Extracellular side of the membrane. A helical transmembrane segment spans residues 283 to 303 (VIFIILCVVCGIFALILLALF). The Cytoplasmic portion of the chain corresponds to 304–319 (SRIRIAIRIIKECSRA). The helical transmembrane segment at 320-340 (IGIMPSIFFFPIFIFLLLCGF) threads the bilayer. The Extracellular portion of the chain corresponds to 341–381 (TVYWVYIGVYLATAGSPTYDDQYRFTGYEADSKLQKIQIYH). The chain crosses the membrane as a helical span at residues 382–402 (FFGYLWTFAFILALNQTTIAG). The Cytoplasmic segment spans residues 403-432 (AISSWYWVQDKKDTPFFPVWSSFFRVIRYH). A helical transmembrane segment spans residues 433-453 (LGSIALGSLILAIVQFIRWVL). The Extracellular segment spans residues 454 to 530 (RFLEKKFKGK…RVAAVNLVSS (77 aa)). Residues 531–551 (FLMFLGRVFITAATVGISLYL) form a helical membrane-spanning segment. The Cytoplasmic segment spans residues 552-559 (LKEHENLS). A helical transmembrane segment spans residues 560-580 (FYIIPVILIGFIAFAISTGFM). Residues 581–628 (SVYDMSIDTMLLCFCEDCERNDGSPERPYYMSKSLRKFVDGKGRSKCC) lie on the Extracellular side of the membrane.

It belongs to the CTL (choline transporter-like) family.

It is found in the cell membrane. Its subcellular location is the mitochondrion outer membrane. It catalyses the reaction choline(out) + n H(+)(in) = choline(in) + n H(+)(out). It carries out the reaction ethanolamine(out) + n H(+)(in) = ethanolamine(in) + n H(+)(out). Its function is as follows. Choline/H+ antiporter, mainly in mitochodria. Also acts as a low-affinity ethanolamine/H+ antiporter, regulating the supply of extracellular ethanolamine (Etn) for the CDP-Etn pathway, redistribute intracellular Etn and balance the CDP-Cho and CDP-Etn arms of the Kennedy pathway. The polypeptide is Choline transporter-like protein 2 (slc44a2) (Dictyostelium discoideum (Social amoeba)).